The primary structure comprises 105 residues: Large ribosomal subunit protein eL36 (105 aa).

A disordered region spans residues 1–20 (MAKEAPAKTGLAVGLNKGHK).

Belongs to the eukaryotic ribosomal protein eL36 family.

In Trichoderma hamatum, this protein is Large ribosomal subunit protein eL36 (rpl36).